A 181-amino-acid chain; its full sequence is NADH-quinone oxidoreductase subunit I (181 aa).

2 consecutive 4Fe-4S ferredoxin-type domains span residues 52-81 (TRDS…LKKS) and 91-120 (EFFR…LISD). Residues Cys-61, Cys-64, Cys-67, Cys-71, Cys-100, Cys-103, Cys-106, and Cys-110 each contribute to the [4Fe-4S] cluster site.

The protein belongs to the complex I 23 kDa subunit family. In terms of assembly, NDH-1 is composed of 13 different subunits. Subunits NuoA, H, J, K, L, M, N constitute the membrane sector of the complex. [4Fe-4S] cluster serves as cofactor.

It localises to the cell inner membrane. It catalyses the reaction a quinone + NADH + 5 H(+)(in) = a quinol + NAD(+) + 4 H(+)(out). Its function is as follows. NDH-1 shuttles electrons from NADH, via FMN and iron-sulfur (Fe-S) centers, to quinones in the respiratory chain. The immediate electron acceptor for the enzyme in this species is believed to be ubiquinone. Couples the redox reaction to proton translocation (for every two electrons transferred, four hydrogen ions are translocated across the cytoplasmic membrane), and thus conserves the redox energy in a proton gradient. This chain is NADH-quinone oxidoreductase subunit I, found in Blochmanniella floridana.